Consider the following 445-residue polypeptide: MIKIRRGLDLPITGEPRQSIEDGPSIRSVAVIGFDYHGMKPTMAVQEGDKVKKGQLLFTDKKTEGVRYTAPASGTVSAVNRGYQRVLQSVVIDVEGGEAETFAKYSESDLANLARQQVVDNLNDAGLWAAIRTRPFSKAPALDAVPAAIFVSAMDTNPLAADPTLIINERPQSFINGLVVLSKLTEGKLFVCHAEGASVPQSSVATYETFGGVHPAGNVGTHMHFLAPVSLERQSWSVGYQDVMAIGDLFTSGELASERVVALGGPQMENPRLVRTLVGASLEELTAGQLKAGENRMISGSVFGGRNAYGPTAFLGRYHNQVSVLAEGRERPFMHFVVPGSKRFSALPIYISTLMKGKKYDFTTSCNGSERAMVPTGSYEQVMPLDILATQLLRSLIVGDTEMAQKLGCLELDEEDLALCSFVCSGKYEYGPILRDNLTRIEKEG.

The protein belongs to the NqrA family. Composed of six subunits; NqrA, NqrB, NqrC, NqrD, NqrE and NqrF.

It catalyses the reaction a ubiquinone + n Na(+)(in) + NADH + H(+) = a ubiquinol + n Na(+)(out) + NAD(+). NQR complex catalyzes the reduction of ubiquinone-1 to ubiquinol by two successive reactions, coupled with the transport of Na(+) ions from the cytoplasm to the periplasm. NqrA to NqrE are probably involved in the second step, the conversion of ubisemiquinone to ubiquinol. The protein is Na(+)-translocating NADH-quinone reductase subunit A of Teredinibacter turnerae (strain ATCC 39867 / T7901).